A 294-amino-acid chain; its full sequence is 4-hydroxy-tetrahydrodipicolinate synthase (294 aa).

Thr-45 is a binding site for pyruvate. Tyr-133 functions as the Proton donor/acceptor in the catalytic mechanism. The Schiff-base intermediate with substrate role is filled by Lys-162. Ile-204 serves as a coordination point for pyruvate.

Belongs to the DapA family. In terms of assembly, homotetramer; dimer of dimers.

The protein localises to the cytoplasm. It catalyses the reaction L-aspartate 4-semialdehyde + pyruvate = (2S,4S)-4-hydroxy-2,3,4,5-tetrahydrodipicolinate + H2O + H(+). It participates in amino-acid biosynthesis; L-lysine biosynthesis via DAP pathway; (S)-tetrahydrodipicolinate from L-aspartate: step 3/4. Functionally, catalyzes the condensation of (S)-aspartate-beta-semialdehyde [(S)-ASA] and pyruvate to 4-hydroxy-tetrahydrodipicolinate (HTPA). The chain is 4-hydroxy-tetrahydrodipicolinate synthase from Bartonella quintana (strain Toulouse) (Rochalimaea quintana).